Reading from the N-terminus, the 146-residue chain is Lysozyme C-2 (146 aa).

Residues 1–18 (MKTLLVLALLLLSVSVQA) form the signal peptide. Positions 19 to 146 (KVYDRCEFAR…VSQYIRGCKL (128 aa)) constitute a C-type lysozyme domain. Intrachain disulfides connect Cys-24-Cys-144, Cys-48-Cys-132, Cys-81-Cys-97, and Cys-93-Cys-111. Residues Glu-53 and Asp-69 contribute to the active site.

Belongs to the glycosyl hydrolase 22 family. Monomer.

It localises to the secreted. The catalysed reaction is Hydrolysis of (1-&gt;4)-beta-linkages between N-acetylmuramic acid and N-acetyl-D-glucosamine residues in a peptidoglycan and between N-acetyl-D-glucosamine residues in chitodextrins.. Functionally, lysozymes have primarily a bacteriolytic function; those in tissues and body fluids are associated with the monocyte-macrophage system and enhance the activity of immunoagents. This Sus scrofa (Pig) protein is Lysozyme C-2.